A 365-amino-acid polypeptide reads, in one-letter code: Protein RecA (365 aa).

77 to 84 (GPESSGKT) lines the ATP pocket.

Belongs to the RecA family.

The protein localises to the cytoplasm. In terms of biological role, can catalyze the hydrolysis of ATP in the presence of single-stranded DNA, the ATP-dependent uptake of single-stranded DNA by duplex DNA, and the ATP-dependent hybridization of homologous single-stranded DNAs. It interacts with LexA causing its activation and leading to its autocatalytic cleavage. This chain is Protein RecA, found in Mesorhizobium japonicum (strain LMG 29417 / CECT 9101 / MAFF 303099) (Mesorhizobium loti (strain MAFF 303099)).